A 452-amino-acid polypeptide reads, in one-letter code: Probable dihydrolipoyllysine-residue succinyltransferase component of 2-oxoglutarate dehydrogenase complex, mitochondrial (452 aa).

In terms of domain architecture, Lipoyl-binding spans 42 to 117; it reads STRIKTPPFP…TIDQDIAVID (76 aa). Lysine 83 carries the N6-lipoyllysine modification. Positions 119 to 225 are disordered; the sequence is SAAPPEGGSA…FSRNEDRVKM (107 aa). 3 stretches are compositionally biased toward basic and acidic residues: residues 130 to 144, 154 to 170, and 195 to 209; these read PKKD…DAAK, KPIE…EQKE, and AKSE…KATE. Active-site residues include histidine 424 and aspartate 428.

The protein belongs to the 2-oxoacid dehydrogenase family. The cofactor is (R)-lipoate.

It localises to the mitochondrion. It carries out the reaction N(6)-[(R)-dihydrolipoyl]-L-lysyl-[protein] + succinyl-CoA = N(6)-[(R)-S(8)-succinyldihydrolipoyl]-L-lysyl-[protein] + CoA. It functions in the pathway amino-acid degradation; L-lysine degradation via saccharopine pathway; glutaryl-CoA from L-lysine: step 6/6. Functionally, the 2-oxoglutarate dehydrogenase complex catalyzes the overall conversion of 2-oxoglutarate to succinyl-CoA and CO(2). It contains multiple copies of three enzymatic components: 2-oxoglutarate dehydrogenase (E1), dihydrolipoamide succinyltransferase (E2) and lipoamide dehydrogenase (E3). The protein is Probable dihydrolipoyllysine-residue succinyltransferase component of 2-oxoglutarate dehydrogenase complex, mitochondrial (kgd2) of Schizosaccharomyces pombe (strain 972 / ATCC 24843) (Fission yeast).